The chain runs to 282 residues: Serine/arginine-rich splicing factor 8 (282 aa).

Ser-2 carries the N-acetylserine modification. Phosphoserine occurs at positions 2 and 26. One can recognise an RRM domain in the interval 14 to 92 (ITLKVDNLTY…RELRVQVARY (79 aa)). Residues 91-282 (RYGRRDLPRS…SPEEEGQMSS (192 aa)) are disordered. The span at 93–107 (GRRDLPRSRQGEPRG) shows a compositional bias: basic and acidic residues. 2 stretches are compositionally biased toward basic residues: residues 116 to 136 (RRSR…RSRS) and 144 to 154 (SRSRSRYRGSR). Low complexity-rich tracts occupy residues 155–177 (YSRS…PYSR) and 185–200 (YGGS…NSRY). A phosphoserine mark is found at Ser-156, Ser-158, Ser-171, Ser-173, and Ser-196. Over residues 201–210 (SRYHSSRSHS) the composition is skewed to basic residues. 2 stretches are compositionally biased toward low complexity: residues 211-227 (KSGS…SKSS) and 234-255 (SSSV…SPPR). The span at 256–271 (VSKRKSKSRSRSKRPP) shows a compositional bias: basic residues. At Ser-273 the chain carries Phosphoserine.

The protein belongs to the splicing factor SR family. Strongly expressed in pancreas, spleen and prostate. Weakly expressed in lung, liver and thymus.

Its subcellular location is the nucleus. Its function is as follows. Involved in pre-mRNA alternative splicing. This is Serine/arginine-rich splicing factor 8 (SRSF8) from Homo sapiens (Human).